Here is an 860-residue protein sequence, read N- to C-terminus: Leucine--tRNA ligase (860 aa).

The 'HIGH' region signature appears at 42–52; sequence PYPSGRLHMGH. Residues 619–623 carry the 'KMSKS' region motif; sequence KMSKS. Residue Lys-622 participates in ATP binding.

Belongs to the class-I aminoacyl-tRNA synthetase family.

It is found in the cytoplasm. The enzyme catalyses tRNA(Leu) + L-leucine + ATP = L-leucyl-tRNA(Leu) + AMP + diphosphate. This Salmonella choleraesuis (strain SC-B67) protein is Leucine--tRNA ligase.